Reading from the N-terminus, the 313-residue chain is LOB domain-containing protein 36 (313 aa).

An LOB domain is found at 6–107 (SPCAACKFLR…HDLENAKKEL (102 aa)). Positions 245–313 (GNFVDSPSTN…SEEGRRNVIG (69 aa)) are disordered. Polar residues predominate over residues 249-260 (DSPSTNNNYHTD). Residues 280–302 (PSQSSQPLPLQTQETQTQTQPNS) are compositionally biased toward low complexity.

This sequence belongs to the LOB domain-containing protein family. In terms of tissue distribution, expressed in trichomes, at the base of many lateral organs, including branching points of the inflorescence and floral organs and in the distal part of the pistil at stages when style and stigma start to develop. Also detected in pedicels and at the base of petals and sepals.

In terms of biological role, controls the proximal-distal patterning in petals and the adaxial-abaxial determination of leaves. Involved in the repression of the homeobox gene BP. The chain is LOB domain-containing protein 36 (LBD36) from Arabidopsis thaliana (Mouse-ear cress).